The following is a 350-amino-acid chain: Transmembrane protein 185A (350 aa).

A run of 7 helical transmembrane segments spans residues 16 to 36 (LIYA…DGII), 41 to 61 (WAVF…ASVG), 81 to 101 (FKAM…EVLV), 111 to 131 (FWLL…AACV), 177 to 197 (ILMS…VLFL), 211 to 231 (ITMA…EILL), and 240 to 260 (AFSC…LMAT). A mediates interaction with MAP1B region spans residues 298-350 (DLHHEDNEETEETPVPEPPKIAPMFRKKARVVITQSPGKYALPPPKLNIEMPD).

This sequence belongs to the TMEM185 family. As to quaternary structure, interacts with MAP1B.

The protein resides in the cell projection. Its subcellular location is the dendrite. It is found in the membrane. The polypeptide is Transmembrane protein 185A (TMEM185A) (Pongo abelii (Sumatran orangutan)).